Consider the following 868-residue polypeptide: Envelope glycoprotein gp160 (868 aa).

Positions 1-33 (MAMRAKGIRKNCQHLWRWGTMLLGMLMICSAAA) are cleaved as a signal peptide. At 34 to 696 (NLWVTVYYGV…ITKWLWYIKI (663 aa)) the chain is on the extracellular side. An intrachain disulfide couples Cys-55 to Cys-75. Residues Asn-89, Asn-131, Asn-138, Asn-139, Asn-142, Asn-162, Asn-166, Asn-195, Asn-198, Asn-208, Asn-245, Asn-252, Asn-273, Asn-287, Asn-300, Asn-306, Asn-312, Asn-342, Asn-349, Asn-365, and Asn-371 are each glycosylated (N-linked (GlcNAc...) asparagine; by host). Cystine bridges form between Cys-120–Cys-216, Cys-127–Cys-207, Cys-132–Cys-163, Cys-229–Cys-258, and Cys-239–Cys-250. A V1 region spans residues 132-162 (CTDLNTNNTTNTTELSIIVVWEQRGKGEMRN). The tract at residues 163–207 (CSFNITTSIRDKVQREYALFYKLDVEPIDDNKNTTNNTKYRLINC) is V2. The tract at residues 307–340 (CTRPNNHTRKRVTLGPGRVWYTTGEILGNIRQAH) is V3. Cysteines 307 and 341 form a disulfide. The tract at residues 373-383 (SSGGDPEIVMH) is CD4-binding loop. 2 disulfide bridges follow: Cys-387-Cys-456 and Cys-394-Cys-429. The interval 394 to 429 (CNSTQLFNSAWNVTSNGTWSVTRKQKDTGDIITLPC) is V4. N-linked (GlcNAc...) asparagine; by host glycosylation is found at Asn-395, Asn-405, Asn-409, Asn-459, and Asn-473. V5 regions lie at residues 472–482 (ENQTTEIFRPG) and 474–482 (QTTEIFRPG). Residues 523-544 (AVGMLGAMFLGFLGAAGSTMGA) are fusion peptide. The tract at residues 586 to 604 (KQLQARILAVERYLKDQQL) is immunosuppression. Cys-610 and Cys-616 are disulfide-bonded. Asn-623, Asn-628, Asn-637, and Asn-649 each carry an N-linked (GlcNAc...) asparagine; by host glycan. The stretch at 645-679 (REIDNYTHLIYTLIEESQNQQEKNQQELLQLDKWA) forms a coiled coil. An MPER; binding to GalCer region spans residues 674 to 695 (QLDKWASLWTWSDITKWLWYIK). Residues 697–717 (FIMIVGGLIGLRIVFAVLSIV) form a helical membrane-spanning segment. Residues 718 to 868 (NRVRQGYSPL…IRQGFERALL (151 aa)) are Cytoplasmic-facing. The short motif at 724–727 (YSPL) is the YXXL motif; contains endocytosis signal element. The segment at 731 to 755 (TLLPNPRGPDRPEGTEEGGGERGRD) is disordered. Basic and acidic residues predominate over residues 738–755 (GPDRPEGTEEGGGERGRD). Cys-776 carries the S-palmitoyl cysteine; by host lipid modification. A Di-leucine internalization motif motif is present at residues 867 to 868 (LL).

Belongs to the HIV-1 env protein family. The mature envelope protein (Env) consists of a homotrimer of non-covalently associated gp120-gp41 heterodimers. The resulting complex protrudes from the virus surface as a spike. There seems to be as few as 10 spikes on the average virion. Interacts with host CD4, CCR5 and CXCR4. Gp120 also interacts with the C-type lectins CD209/DC-SIGN and CLEC4M/DC-SIGNR (collectively referred to as DC-SIGN(R)). Gp120 and gp41 interact with GalCer. Gp120 interacts with host ITGA4/ITGB7 complex; on CD4+ T-cells, this interaction results in rapid activation of integrin ITGAL/LFA-1, which facilitates efficient cell-to-cell spreading of HIV-1. Gp120 interacts with cell-associated heparan sulfate; this interaction increases virus infectivity on permissive cells and may be involved in infection of CD4- cells. In terms of assembly, the mature envelope protein (Env) consists of a homotrimer of non-covalently associated gp120-gp41 heterodimers. The resulting complex protrudes from the virus surface as a spike. There seems to be as few as 10 spikes on the average virion. Post-translationally, highly glycosylated by host. The high number of glycan on the protein is reffered to as 'glycan shield' because it contributes to hide protein sequence from adaptive immune system. Palmitoylation of the transmembrane protein and of Env polyprotein (prior to its proteolytic cleavage) is essential for their association with host cell membrane lipid rafts. Palmitoylation is therefore required for envelope trafficking to classical lipid rafts, but not for viral replication. In terms of processing, specific enzymatic cleavages in vivo yield mature proteins. Envelope glycoproteins are synthesized as an inactive precursor that is heavily N-glycosylated and processed likely by host cell furin in the Golgi to yield the mature SU and TM proteins. The cleavage site between SU and TM requires the minimal sequence [KR]-X-[KR]-R. About 2 of the 9 disulfide bonds of gp41 are reduced by P4HB/PDI, following binding to CD4 receptor.

The protein localises to the virion membrane. It is found in the host cell membrane. Its subcellular location is the host endosome membrane. Functionally, oligomerizes in the host endoplasmic reticulum into predominantly trimers. In a second time, gp160 transits in the host Golgi, where glycosylation is completed. The precursor is then proteolytically cleaved in the trans-Golgi and thereby activated by cellular furin or furin-like proteases to produce gp120 and gp41. Attaches the virus to the host lymphoid cell by binding to the primary receptor CD4. This interaction induces a structural rearrangement creating a high affinity binding site for a chemokine coreceptor like CXCR4 and/or CCR5. Acts as a ligand for CD209/DC-SIGN and CLEC4M/DC-SIGNR, which are respectively found on dendritic cells (DCs), and on endothelial cells of liver sinusoids and lymph node sinuses. These interactions allow capture of viral particles at mucosal surfaces by these cells and subsequent transmission to permissive cells. HIV subverts the migration properties of dendritic cells to gain access to CD4+ T-cells in lymph nodes. Virus transmission to permissive T-cells occurs either in trans (without DCs infection, through viral capture and transmission), or in cis (following DCs productive infection, through the usual CD4-gp120 interaction), thereby inducing a robust infection. In trans infection, bound virions remain infectious over days and it is proposed that they are not degraded, but protected in non-lysosomal acidic organelles within the DCs close to the cell membrane thus contributing to the viral infectious potential during DCs' migration from the periphery to the lymphoid tissues. On arrival at lymphoid tissues, intact virions recycle back to DCs' cell surface allowing virus transmission to CD4+ T-cells. In terms of biological role, acts as a class I viral fusion protein. Under the current model, the protein has at least 3 conformational states: pre-fusion native state, pre-hairpin intermediate state, and post-fusion hairpin state. During fusion of viral and target intracellular membranes, the coiled coil regions (heptad repeats) assume a trimer-of-hairpins structure, positioning the fusion peptide in close proximity to the C-terminal region of the ectodomain. The formation of this structure appears to drive apposition and subsequent fusion of viral and target cell membranes. Complete fusion occurs in host cell endosomes and is dynamin-dependent, however some lipid transfer might occur at the plasma membrane. The virus undergoes clathrin-dependent internalization long before endosomal fusion, thus minimizing the surface exposure of conserved viral epitopes during fusion and reducing the efficacy of inhibitors targeting these epitopes. Membranes fusion leads to delivery of the nucleocapsid into the cytoplasm. The protein is Envelope glycoprotein gp160 of Human immunodeficiency virus type 1 group M subtype B (isolate CDC-451) (HIV-1).